The following is a 565-amino-acid chain: Heme/hemopexin transporter protein HuxB (565 aa).

The signal sequence occupies residues 1–26; it reads MKMRPRYSVIASAVSLGFVLSKSVMA. The region spanning 73–150 is the POTRA domain; it reads FPLKQVQILD…GTVKILLLKG (78 aa).

The protein belongs to the TPS (TC 1.B.20) family.

The protein localises to the cell outer membrane. Functionally, likely functions in the release of soluble HxuA from the cell. In terms of biological role, probable member of a two partner secretion pathway (TPS) in which it mediates the secretion of HuxA. The polypeptide is Heme/hemopexin transporter protein HuxB (hxuB) (Haemophilus influenzae (strain ATCC 51907 / DSM 11121 / KW20 / Rd)).